A 160-amino-acid polypeptide reads, in one-letter code: Large ribosomal subunit protein eL21 (160 aa).

Composition is skewed to basic and acidic residues over residues 112-123 and 136-145; these read NDQKKKEAKEKG and REAHFVRTNG. Residues 112-145 form a disordered region; the sequence is NDQKKKEAKEKGTWVQLKRQPAPPREAHFVRTNG.

It belongs to the eukaryotic ribosomal protein eL21 family. As to quaternary structure, component of the large ribosomal subunit.

The protein localises to the cytoplasm. It localises to the cytosol. It is found in the endoplasmic reticulum. Component of the large ribosomal subunit. The ribosome is a large ribonucleoprotein complex responsible for the synthesis of proteins in the cell. The polypeptide is Large ribosomal subunit protein eL21 (RPL21) (Capra hircus (Goat)).